Here is a 437-residue protein sequence, read N- to C-terminus: ATP-dependent protease ATPase subunit HslU (437 aa).

ATP is bound by residues Val18, 60 to 65 (GVGKTE), Asp250, Glu315, and Arg387.

This sequence belongs to the ClpX chaperone family. HslU subfamily. A double ring-shaped homohexamer of HslV is capped on each side by a ring-shaped HslU homohexamer. The assembly of the HslU/HslV complex is dependent on binding of ATP.

Its subcellular location is the cytoplasm. ATPase subunit of a proteasome-like degradation complex; this subunit has chaperone activity. The binding of ATP and its subsequent hydrolysis by HslU are essential for unfolding of protein substrates subsequently hydrolyzed by HslV. HslU recognizes the N-terminal part of its protein substrates and unfolds these before they are guided to HslV for hydrolysis. This Desulfovibrio desulfuricans (strain ATCC 27774 / DSM 6949 / MB) protein is ATP-dependent protease ATPase subunit HslU.